The following is a 154-amino-acid chain: Myoglobin (154 aa).

Residues 2 to 148 form the Globin domain; the sequence is GLSDQEWQQV…FRNDMASKYK (147 aa). Position 65 (His-65) interacts with nitrite. His-65 is a binding site for O2. His-94 contacts heme b.

It belongs to the globin family. As to quaternary structure, monomeric.

It is found in the cytoplasm. The protein resides in the sarcoplasm. It catalyses the reaction Fe(III)-heme b-[protein] + nitric oxide + H2O = Fe(II)-heme b-[protein] + nitrite + 2 H(+). The catalysed reaction is H2O2 + AH2 = A + 2 H2O. Functionally, monomeric heme protein which primary function is to store oxygen and facilitate its diffusion within muscle tissues. Reversibly binds oxygen through a pentacoordinated heme iron and enables its timely and efficient release as needed during periods of heightened demand. Depending on the oxidative conditions of tissues and cells, and in addition to its ability to bind oxygen, it also has a nitrite reductase activity whereby it regulates the production of bioactive nitric oxide. Under stress conditions, like hypoxia and anoxia, it also protects cells against reactive oxygen species thanks to its pseudoperoxidase activity. The protein is Myoglobin (MB) of Anas poecilorhyncha (Indian spot-billed duck).